The following is a 46-amino-acid chain: Escargot/snail protein homolog (46 aa).

3 C2H2-type zinc fingers span residues I1–H4, C8–H30, and F36–A46.

It belongs to the snail C2H2-type zinc-finger protein family.

It localises to the nucleus. This chain is Escargot/snail protein homolog, found in Oryzias latipes (Japanese rice fish).